Reading from the N-terminus, the 383-residue chain is L-lactate dehydrogenase (383 aa).

Residues 1–380 form the FMN hydroxy acid dehydrogenase domain; sequence MIIASTFDYR…TCESLVNTDA (380 aa). Tyr24 provides a ligand contact to substrate. Ser106 and Gln127 together coordinate FMN. Tyr129 is a substrate binding site. An FMN-binding site is contributed by Thr155. Position 164 (Arg164) interacts with substrate. Lys251 is a binding site for FMN. The active-site Proton acceptor is the His275. Arg278 lines the substrate pocket. Position 306-330 (306-330) interacts with FMN; the sequence is DSGVRSGLDVVRMIAQGADAVMIGR.

This sequence belongs to the FMN-dependent alpha-hydroxy acid dehydrogenase family. Requires FMN as cofactor.

It localises to the cell inner membrane. The enzyme catalyses (S)-lactate + A = pyruvate + AH2. Its function is as follows. Catalyzes the conversion of L-lactate to pyruvate. Is coupled to the respiratory chain. The protein is L-lactate dehydrogenase of Bartonella tribocorum (strain CIP 105476 / IBS 506).